A 630-amino-acid polypeptide reads, in one-letter code: Phosphomethylpyrimidine synthase (630 aa).

Disordered stretches follow at residues 1 to 22 (MADIDSRLDTTQATPIGVTTGP) and 97 to 120 (AQREVRPEDNGQLGPDRSGGVPAF). Substrate is bound by residues asparagine 224, methionine 253, tyrosine 282, histidine 318, 338–340 (SRG), 379–382 (DGLR), and glutamate 418. Histidine 422 is a binding site for Zn(2+). Tyrosine 445 contacts substrate. Position 486 (histidine 486) interacts with Zn(2+). Residues cysteine 566, cysteine 569, and cysteine 574 each coordinate [4Fe-4S] cluster.

The protein belongs to the ThiC family. As to quaternary structure, homodimer. [4Fe-4S] cluster serves as cofactor.

The enzyme catalyses 5-amino-1-(5-phospho-beta-D-ribosyl)imidazole + S-adenosyl-L-methionine = 4-amino-2-methyl-5-(phosphooxymethyl)pyrimidine + CO + 5'-deoxyadenosine + formate + L-methionine + 3 H(+). It participates in cofactor biosynthesis; thiamine diphosphate biosynthesis. Its function is as follows. Catalyzes the synthesis of the hydroxymethylpyrimidine phosphate (HMP-P) moiety of thiamine from aminoimidazole ribotide (AIR) in a radical S-adenosyl-L-methionine (SAM)-dependent reaction. The chain is Phosphomethylpyrimidine synthase from Sphingopyxis alaskensis (strain DSM 13593 / LMG 18877 / RB2256) (Sphingomonas alaskensis).